We begin with the raw amino-acid sequence, 171 residues long: ATP synthase subunit b (171 aa).

The helical transmembrane segment at Phe12–Tyr34 threads the bilayer.

Belongs to the ATPase B chain family. In terms of assembly, F-type ATPases have 2 components, F(1) - the catalytic core - and F(0) - the membrane proton channel. F(1) has five subunits: alpha(3), beta(3), gamma(1), delta(1), epsilon(1). F(0) has four main subunits: a(1), b(1), b'(1) and c(10-14). The alpha and beta chains form an alternating ring which encloses part of the gamma chain. F(1) is attached to F(0) by a central stalk formed by the gamma and epsilon chains, while a peripheral stalk is formed by the delta, b and b' chains.

Its subcellular location is the cellular thylakoid membrane. Functionally, f(1)F(0) ATP synthase produces ATP from ADP in the presence of a proton or sodium gradient. F-type ATPases consist of two structural domains, F(1) containing the extramembraneous catalytic core and F(0) containing the membrane proton channel, linked together by a central stalk and a peripheral stalk. During catalysis, ATP synthesis in the catalytic domain of F(1) is coupled via a rotary mechanism of the central stalk subunits to proton translocation. Its function is as follows. Component of the F(0) channel, it forms part of the peripheral stalk, linking F(1) to F(0). This Prochlorococcus marinus (strain MIT 9211) protein is ATP synthase subunit b.